The primary structure comprises 86 residues: Translation initiation factor IF-1 2 (86 aa).

One can recognise an S1-like domain in the interval 1–72 (MAKEELLEME…SKGRITFRHI (72 aa)).

This sequence belongs to the IF-1 family. In terms of assembly, component of the 30S ribosomal translation pre-initiation complex which assembles on the 30S ribosome in the order IF-2 and IF-3, IF-1 and N-formylmethionyl-tRNA(fMet); mRNA recruitment can occur at any time during PIC assembly.

The protein resides in the cytoplasm. One of the essential components for the initiation of protein synthesis. Stabilizes the binding of IF-2 and IF-3 on the 30S subunit to which N-formylmethionyl-tRNA(fMet) subsequently binds. Helps modulate mRNA selection, yielding the 30S pre-initiation complex (PIC). Upon addition of the 50S ribosomal subunit IF-1, IF-2 and IF-3 are released leaving the mature 70S translation initiation complex. The chain is Translation initiation factor IF-1 2 from Polynucleobacter asymbioticus (strain DSM 18221 / CIP 109841 / QLW-P1DMWA-1) (Polynucleobacter necessarius subsp. asymbioticus).